The primary structure comprises 910 residues: MINSLLTRVFGSRNERQLRQLNRIVAKINALEPEIEKLSDEQLQAKTPEFKQRIADGEALDKVLPEAFAVCREAGRRVLGMRHYDVQLIGGMVLHLGKIAEMRTGEGKTLVATLPVYLNALEGKGVHVVTVNDYLARRDAAQMGKLYNWLGLSVGVVYPGMPHSDKREAYASDITYGTNNEFGFDYLRDNMALSKADRYQRGLHYAIVDEVDSILIDEARTPLIISGPADDSPELYIRVNRVVPNLVKQEAEDGEGDFWVDEKGKQVHLSEAGMEHAEQLLVEAGILDGETEGLYAPQNLTVVHHLNAALRAHAIYQRDVDYIVRDGEVVIVDEFTGRTLSGRRWSDGLHQAVEAKEGVPVQRENQTLASITFQNLFRMYKKLSGMTGTADTEAFEFQSIYGLEVVVIPTNRPTIRKDSPDQVFLNRKGKFNAVLADIEECAKRGQPVLVGTTSIETSEMLSEHLAKAGVKHEVLNAKQHDREATIVANAGRPAAVTIATNMAGRGTDIVLGGSLEAEIHELGEDATDAQKAAVKAEWQQRHDAVKAAGGLHIVGTERHESRRIDNQLRGRSGRQGDPGSSRFYLSLEDNLMRIFASDWVQKAMRMMGMKEDDVIEDRLVSRQIEKAQRKVEAHNFDIRKNLLDFDDVNNDQRKVIYAQRDELLDAESVKDNVDGIRDDVIFDIVARFVPPNSIDEQWDLRGLEATLESDFGLQMSLTGLVKEHEELDAEAIAAKVQERVNQHFAEKEAGVGEETMRALEKHVMLTVLDQSWKEHLARMDYLRQGIYLRGYAQKQPKQEYKKEAFELFSDMLENVKREVVTLLSRVRIRSDEEVQALEAAERQQVEARLSQSQFQHQDVGSYSADEEAAQVQAAQQGIAQVQRDEPKIGRNDPCPCGSGKKYKHCHGQLS.

ATP contacts are provided by residues Gln-87, 105 to 109 (GEGKT), and Asp-508. Residues 558–568 (RHESRRIDNQL) are compositionally biased toward basic and acidic residues. 2 disordered regions span residues 558–580 (RHESRRIDNQLRGRSGRQGDPGS) and 873–910 (AAQQGIAQVQRDEPKIGRNDPCPCGSGKKYKHCHGQLS). Zn(2+)-binding residues include Cys-894, Cys-896, Cys-905, and His-906. The span at 900–910 (KKYKHCHGQLS) shows a compositional bias: basic residues.

This sequence belongs to the SecA family. As to quaternary structure, monomer and homodimer. Part of the essential Sec protein translocation apparatus which comprises SecA, SecYEG and auxiliary proteins SecDF-YajC and YidC. Zn(2+) is required as a cofactor.

It localises to the cell inner membrane. The protein resides in the cytoplasm. The catalysed reaction is ATP + H2O + cellular proteinSide 1 = ADP + phosphate + cellular proteinSide 2.. Part of the Sec protein translocase complex. Interacts with the SecYEG preprotein conducting channel. Has a central role in coupling the hydrolysis of ATP to the transfer of proteins into and across the cell membrane, serving both as a receptor for the preprotein-SecB complex and as an ATP-driven molecular motor driving the stepwise translocation of polypeptide chains across the membrane. In Stenotrophomonas maltophilia (strain R551-3), this protein is Protein translocase subunit SecA.